Here is a 259-residue protein sequence, read N- to C-terminus: Probable kinetochore protein spc25 (259 aa).

Over residues 1–20 (MSRKSVMSSTFEPSLSTSRQ) the composition is skewed to polar residues. Residues 1–25 (MSRKSVMSSTFEPSLSTSRQPLGPS) form a disordered region. Positions 59-162 (RKRVLEERNQ…HAAQLEAQAR (104 aa)) form a coiled coil.

Belongs to the SPC25 family. As to quaternary structure, component of the NDC80 complex, which consists of kpr-1/ndc80, kpr-2/nuf2, kpr-3/spc24 and kpr-4/spc25.

Its subcellular location is the nucleus. The protein resides in the chromosome. It is found in the centromere. It localises to the kinetochore. Acts as a component of the essential kinetochore-associated NDC80 complex, which is required for chromosome segregation and spindle checkpoint activity. The polypeptide is Probable kinetochore protein spc25 (kpr-4) (Neurospora crassa (strain ATCC 24698 / 74-OR23-1A / CBS 708.71 / DSM 1257 / FGSC 987)).